A 250-amino-acid chain; its full sequence is Ribosomal RNA small subunit methyltransferase G (250 aa).

S-adenosyl-L-methionine contacts are provided by residues glycine 78, leucine 83, 129–130 (AE), and arginine 144. The disordered stretch occupies residues 224–250 (IAAPRKRGGQQRRAGHARGTSNRRRGT). Basic residues predominate over residues 227–250 (PRKRGGQQRRAGHARGTSNRRRGT).

It belongs to the methyltransferase superfamily. RNA methyltransferase RsmG family.

It localises to the cytoplasm. In terms of biological role, specifically methylates the N7 position of guanine in position 518 of 16S rRNA. This is Ribosomal RNA small subunit methyltransferase G from Nocardioides sp. (strain ATCC BAA-499 / JS614).